We begin with the raw amino-acid sequence, 67 residues long: DNA-directed RNA polymerases I, II, and III subunit RPABC5 (67 aa).

Zn(2+) is bound by residues cysteine 7, cysteine 10, cysteine 44, and cysteine 45.

The protein belongs to the archaeal Rpo10/eukaryotic RPB10 RNA polymerase subunit family. As to quaternary structure, component of the RNA polymerase I (Pol I), RNA polymerase II (Pol II) and RNA polymerase III (Pol III) complexes consisting of at least 13, 12 and 17 subunits, respectively. Pol I complex consists of a ten-subunit catalytic core composed of POLR1A/RPA1, POLR1B/RPA2, POLR1C/RPAC1, POLR1D/RPAC2, POLR1H/RPA12, POLR2E/RPABC1, POLR2F/RPABC2, POLR2H/RPABC3, POLR2K/RPABC4 and POLR2L/RPABC5; a mobile stalk subunit POLR1F/RPA43 protruding from the core and additional subunits homologous to general transcription factors POLR1E/RPA49 and POLR1G/RPA34. Part of Pol I pre-initiation complex (PIC), in which Pol I core assembles with RRN3 and promoter-bound UTBF and SL1/TIF-IB complex. Pol II complex contains a ten-subunit catalytic core composed of POLR2A/RPB1, POLR2B/RPB2, POLR2C/RPB3, POLR2I/RPB9, POLR2J/RPB11, POLR2E/RPABC1, POLR2F/RPABC2, POLR2H/RPABC3, POLR2K/RPABC4 and POLR2L/RPABC5 and a mobile stalk composed of two subunits POLR2D/RPB4 and POLR2G/RPB7. Part of Pol II(G) complex, in which Pol II core associates with an additional subunit POLR2M; unlike conventional Pol II, Pol II(G) functions as a transcriptional repressor. Part of TBP-based Pol II pre-initiation complex (PIC), in which Pol II core assembles with general transcription factors and other specific initiation factors including GTF2E1, GTF2E2, GTF2F1, GTF2F2, TCEA1, ERCC2, ERCC3, GTF2H2, GTF2H3, GTF2H4, GTF2H5, GTF2A1, GTF2A2, GTF2B and TBP; this large multi-subunit PIC complex mediates DNA unwinding and targets Pol II core to the transcription start site where the first phosphodiester bond forms. Pol III complex consists of a ten-subunit catalytic core composed of POLR3A/RPC1, POLR3B/RPC2, POLR1C/RPAC1, POLR1D/RPAC2, POLR3K/RPC10, POLR2E/RPABC1, POLR2F/RPABC2, POLR2H/RPABC3, POLR2K/RPABC4 and POLR2L/RPABC5; a mobile stalk composed of two subunits POLR3H/RPC8 and CRCP/RPC9, protruding from the core and functioning primarily in transcription initiation; and additional subunits homologous to general transcription factors of the RNA polymerase II machinery, POLR3C/RPC3-POLR3F/RPC6-POLR3G/RPC7 heterotrimer required for transcription initiation and POLR3D/RPC4-POLR3E/RPC5 heterodimer involved in both transcription initiation and termination.

Its subcellular location is the nucleus. It is found in the nucleolus. Functionally, DNA-dependent RNA polymerase catalyzes the transcription of DNA into RNA using the four ribonucleoside triphosphates as substrates. Common component of RNA polymerases I, II and III which synthesize ribosomal RNA precursors, mRNA precursors and many functional non-coding RNAs, and a small RNAs, such as 5S rRNA and tRNAs, respectively. The sequence is that of DNA-directed RNA polymerases I, II, and III subunit RPABC5 (POLR2L) from Bos taurus (Bovine).